The chain runs to 353 residues: Photosystem II D2 protein (353 aa).

An N-acetylthreonine modification is found at Thr-2. The residue at position 2 (Thr-2) is a Phosphothreonine. A helical transmembrane segment spans residues 41 to 61 (CAYFAVGGWFTGTTFVTSWYT). His-118 is a binding site for chlorophyll a. The helical transmembrane segment at 125 to 141 (GFMLRQFELARSVQLRP) threads the bilayer. Pheophytin a contacts are provided by Gln-130 and Asn-143. The chain crosses the membrane as a helical span at residues 153-166 (VFVSVFLIYPLGQS). Chlorophyll a is bound at residue His-198. The chain crosses the membrane as a helical span at residues 208–228 (AALLCAIHGATVENTLFEDGD). 2 residues coordinate a plastoquinone: His-215 and Phe-262. His-215 is a binding site for Fe cation. His-269 lines the Fe cation pocket. Residues 279 to 295 (GLWMSALGVVGLALNLR) traverse the membrane as a helical segment.

It belongs to the reaction center PufL/M/PsbA/D family. In terms of assembly, PSII is composed of 1 copy each of membrane proteins PsbA, PsbB, PsbC, PsbD, PsbE, PsbF, PsbH, PsbI, PsbJ, PsbK, PsbL, PsbM, PsbT, PsbX, PsbY, PsbZ, Psb30/Ycf12, at least 3 peripheral proteins of the oxygen-evolving complex and a large number of cofactors. It forms dimeric complexes. The D1/D2 heterodimer binds P680, chlorophylls that are the primary electron donor of PSII, and subsequent electron acceptors. It shares a non-heme iron and each subunit binds pheophytin, quinone, additional chlorophylls, carotenoids and lipids. There is also a Cl(-1) ion associated with D1 and D2, which is required for oxygen evolution. The PSII complex binds additional chlorophylls, carotenoids and specific lipids. is required as a cofactor.

It localises to the plastid. It is found in the chloroplast thylakoid membrane. It catalyses the reaction 2 a plastoquinone + 4 hnu + 2 H2O = 2 a plastoquinol + O2. In terms of biological role, photosystem II (PSII) is a light-driven water:plastoquinone oxidoreductase that uses light energy to abstract electrons from H(2)O, generating O(2) and a proton gradient subsequently used for ATP formation. It consists of a core antenna complex that captures photons, and an electron transfer chain that converts photonic excitation into a charge separation. The D1/D2 (PsbA/PsbD) reaction center heterodimer binds P680, the primary electron donor of PSII as well as several subsequent electron acceptors. D2 is needed for assembly of a stable PSII complex. This chain is Photosystem II D2 protein, found in Jasminum nudiflorum (Winter jasmine).